Here is a 418-residue protein sequence, read N- to C-terminus: L-rhamnose isomerase (418 aa).

Mn(2+) contacts are provided by H262, D294, and D296.

It belongs to the rhamnose isomerase family. Mn(2+) is required as a cofactor.

Its subcellular location is the cytoplasm. The catalysed reaction is L-rhamnopyranose = L-rhamnulose. It participates in carbohydrate degradation; L-rhamnose degradation; glycerone phosphate from L-rhamnose: step 1/3. In terms of biological role, catalyzes the interconversion of L-rhamnose and L-rhamnulose. This Bacteroides thetaiotaomicron (strain ATCC 29148 / DSM 2079 / JCM 5827 / CCUG 10774 / NCTC 10582 / VPI-5482 / E50) protein is L-rhamnose isomerase.